The following is a 436-amino-acid chain: GTPase Der (436 aa).

2 EngA-type G domains span residues 4 to 167 and 176 to 351; these read PIVA…GEEE and IRLS…ENHK. GTP contacts are provided by residues 10–17, 57–61, 119–122, 182–189, 229–233, and 294–297; these read GRPNVGKS, DTGGI, NKVD, DTAGM, and NKWD. The KH-like domain occupies 352–436; that stretch reads KRVQSSTLNE…PIHIIARKRN (85 aa).

This sequence belongs to the TRAFAC class TrmE-Era-EngA-EngB-Septin-like GTPase superfamily. EngA (Der) GTPase family. Associates with the 50S ribosomal subunit.

In terms of biological role, GTPase that plays an essential role in the late steps of ribosome biogenesis. This Staphylococcus aureus (strain USA300) protein is GTPase Der.